The chain runs to 122 residues: Large ribosomal subunit protein bL19 (122 aa).

This sequence belongs to the bacterial ribosomal protein bL19 family.

Its function is as follows. This protein is located at the 30S-50S ribosomal subunit interface and may play a role in the structure and function of the aminoacyl-tRNA binding site. This chain is Large ribosomal subunit protein bL19, found in Prosthecochloris aestuarii (strain DSM 271 / SK 413).